The primary structure comprises 351 residues: Auxin efflux carrier component 5 (351 aa).

Helical transmembrane passes span 7–27, 39–59, 71–91, 100–120, 132–152, 210–230, 234–254, 271–291, 295–315, and 329–349; these read VYKV…GYGS, CDAI…IEFT, FIAA…LWAK, WSIT…GVPL, LVVQ…LFVL, ILGI…PGIL, ILIM…IFMA, MVLK…VLGL, VLRV…FIFA, and VIFG…ALEF.

Belongs to the auxin efflux carrier (TC 2.A.69.1) family. Expressed in elongating parts of hypocotyl, cotyledon vasculature and guard cells. Detected in root pericycle and root tip and at later developmental stages in leaves, stems and flowers. Expressed in veins of mature leaves.

The protein localises to the endoplasmic reticulum membrane. Its subcellular location is the cell membrane. In terms of biological role, auxin transporter regulating intracellular auxin homeostasis and metabolism. Mediates the auxin transport from the cytosol into the lumen of the endoplasmic reticulum. May also act as an auxin efflux carrier when located to the cell membrane. PIN5 and PIN8 may have an antagonistic/compensatory activity. Involved in unfolded protein response (UPR) activation. Involved in the control of vein patterning. Promotes vein formation. PIN5, PIN6, and PIN8 control vein network geometry, but they are expressed in mutually exclusive domains of leaf vascular cells. This Arabidopsis thaliana (Mouse-ear cress) protein is Auxin efflux carrier component 5.